The chain runs to 988 residues: Ephrin type-B receptor 3 (988 aa).

A disordered region spans residues 1–24 (GVSSRARRPPGSSRSSRRGVTSEL). The Extracellular portion of the chain corresponds to 1–534 (GVSSRARRPP…TSKTFQELPL (534 aa)). In terms of domain architecture, Eph LBD spans 11-189 (GSSRSSRRGV…FYKKCSNTIA (179 aa)). Residues Cys53 and Cys171 are joined by a disulfide bond. 2 consecutive Fibronectin type-III domains span residues 311–424 (VPSA…TNQA) and 425–522 (APSA…TAED). Asn323 and Asn418 each carry an N-linked (GlcNAc...) asparagine glycan. A helical membrane pass occupies residues 535–555 (IVGSATAGLLFVIVVVIIAIV). Topologically, residues 556 to 988 (CFRKGMVTEQ…QMNQTLPVQV (433 aa)) are cytoplasmic. At Tyr604 the chain carries Phosphotyrosine; by autocatalysis. Residues 623 to 886 (VKIEEVIGAG…QIVNTLDKLI (264 aa)) enclose the Protein kinase domain. Residues 629 to 637 (IGAGEFGEV) and Lys655 contribute to the ATP site. Catalysis depends on Asp748, which acts as the Proton acceptor. In terms of domain architecture, SAM spans 915-979 (TTFTTVGDWL…LSSIQDMRLQ (65 aa)). A PDZ-binding motif is present at residues 986–988 (VQV).

This sequence belongs to the protein kinase superfamily. Tyr protein kinase family. Ephrin receptor subfamily. In terms of assembly, heterotetramer upon binding of the ligand. The heterotetramer is composed of an ephrin dimer and a receptor dimer. Oligomerization is probably required to induce biological responses. Phosphorylated. Autophosphorylates upon ligand-binding. Autophosphorylation on Tyr-604 is required for interaction with SH2 domain-containing proteins. Present in 10-day embryonic brain and body tissues. Prominent expression in kidney. Lower expression in lung, and barely detectable in brain, liver, heart, skeletal muscle and thymus.

Its subcellular location is the cell membrane. It is found in the cell projection. The protein resides in the dendrite. It catalyses the reaction L-tyrosyl-[protein] + ATP = O-phospho-L-tyrosyl-[protein] + ADP + H(+). In terms of biological role, receptor tyrosine kinase which binds promiscuously transmembrane ephrin-B family ligands residing on adjacent cells, leading to contact-dependent bidirectional signaling into neighboring cells. The signaling pathway downstream of the receptor is referred to as forward signaling while the signaling pathway downstream of the ephrin ligand is referred to as reverse signaling. Generally has an overlapping and redundant function with EPHB2. Like EPHB2, functions in axon guidance during development. In addition to its role in axon guidance also plays an important redundant role with other ephrin-B receptors in development and maturation of dendritic spines and the formation of excitatory synapses. May control other aspects of development through regulation of cell migration and positioning. In Gallus gallus (Chicken), this protein is Ephrin type-B receptor 3 (EPHB3).